A 182-amino-acid polypeptide reads, in one-letter code: Transcriptional repressor NrdR (182 aa).

Positions 1 to 24 (MRCPYCGGLDTQVRDSRPTEDNTA) are disordered. Residues 3-34 (CPYCGGLDTQVRDSRPTEDNTAIRRRRICPDC) fold into a zinc finger. Basic and acidic residues predominate over residues 12–24 (QVRDSRPTEDNTA). Residues 49 to 139 (LMVLKRSGRR…VYRNFREAKD (91 aa)) enclose the ATP-cone domain. Positions 146-182 (ELSQPELAQSDDVKAEGGAEGGRDKPKAAGKPPRSAE) are disordered. Basic and acidic residues predominate over residues 156–172 (DDVKAEGGAEGGRDKPK).

This sequence belongs to the NrdR family. Zn(2+) serves as cofactor.

Its function is as follows. Negatively regulates transcription of bacterial ribonucleotide reductase nrd genes and operons by binding to NrdR-boxes. In Xanthobacter autotrophicus (strain ATCC BAA-1158 / Py2), this protein is Transcriptional repressor NrdR.